The sequence spans 396 residues: N-acyl-phosphatidylethanolamine-hydrolyzing phospholipase D (396 aa).

Position 1 is an N-acetylmethionine (M1). Composition is skewed to polar residues over residues 1–12 and 26–37; these read MDENENSQSPAP and NSVQNSGGSESS. The segment at 1–41 is disordered; the sequence is MDENENSQSPAPSHQYPKETLRKRQNSVQNSGGSESSRLSR. Residues H185 and H187 each coordinate Zn(2+). Y188 is a binding site for an N-acyl-1,2-diacyl-sn-glycero-3-phosphoethanolamine. Positions 189, 190, and 253 each coordinate Zn(2+). Residue K256 participates in deoxycholate binding. A Zn(2+)-binding site is contributed by D284. H321 contacts an N-acyl-1,2-diacyl-sn-glycero-3-phosphoethanolamine. H343 serves as a coordination point for Zn(2+). Position 348 (A348) interacts with deoxycholate.

Belongs to the NAPE-PLD family. In terms of assembly, homodimer. Bile acids promote the assembly of inactive monomers into an active dimer and enable catalysis. Requires Zn(2+) as cofactor. As to expression, widely expressed. Highest expression in brain, kidney and testis (at protein level). Expressed in adipose tissue (at protein level).

It localises to the golgi apparatus membrane. The protein resides in the early endosome membrane. Its subcellular location is the nucleus envelope. The protein localises to the nucleus. It is found in the nucleoplasm. The enzyme catalyses an N-acyl-1,2-diacyl-sn-glycero-3-phosphoethanolamine + H2O = an N-acylethanolamine + a 1,2-diacyl-sn-glycero-3-phosphate + H(+). It carries out the reaction N-butanoyl-1-hexadecanoyl-2-(9Z,12Z-octadecadienoyl)-sn-glycero-3-phosphoethanolamine + H2O = N-butanoyl ethanolamine + 1-hexadecanoyl-2-(9Z,12Z-octadecadienoyl)-sn-glycero-3-phosphate + H(+). The catalysed reaction is N-hexanoyl-1-hexadecanoyl-2-(9Z,12Z-octadecadienoyl)-sn-glycero-3-phosphoethanolamine + H2O = N-hexanoyl ethanolamine + 1-hexadecanoyl-2-(9Z,12Z-octadecadienoyl)-sn-glycero-3-phosphate + H(+). It catalyses the reaction N-octanoyl-1-hexadecanoyl-2-(9Z,12Z-octadecadienoyl)-sn-glycero-3-phosphoethanolamine + H2O = N-octanoyl ethanolamine + 1-hexadecanoyl-2-(9Z,12Z-octadecadienoyl)-sn-glycero-3-phosphate + H(+). The enzyme catalyses N-decanoyl-1-hexadecanoyl-2-(9Z,12Z-octadecadienoyl)-sn-glycero-3-phosphoethanolamine + H2O = N-decanoyl ethanolamine + 1-hexadecanoyl-2-(9Z,12Z-octadecadienoyl)-sn-glycero-3-phosphate + H(+). It carries out the reaction N-dodecanoyl-1,2-di-(9Z-octadecenoyl)-sn-glycero-3-phosphoethanolamine + H2O = N-dodecanoylethanolamine + 1,2-di-(9Z-octadecenoyl)-sn-glycero-3-phosphate + H(+). The catalysed reaction is N-tetradecanoyl-1,2-di-(9Z-octadecenoyl)-sn-glycero-3-phosphoethanolamine + H2O = N-tetradecanoylethanolamine + 1,2-di-(9Z-octadecenoyl)-sn-glycero-3-phosphate + H(+). It catalyses the reaction N-hexadecanoyl-1,2-di-(9Z-octadecenoyl)-sn-glycero-3-phosphoethanolamine + H2O = N-hexadecanoylethanolamine + 1,2-di-(9Z-octadecenoyl)-sn-glycero-3-phosphate + H(+). The enzyme catalyses N,1-dihexadecanoyl-2-(9Z,12Z-octadecadienoyl)-sn-glycero-3-phosphoethanolamine + H2O = 1-hexadecanoyl-2-(9Z,12Z-octadecadienoyl)-sn-glycero-3-phosphate + N-hexadecanoylethanolamine + H(+). It carries out the reaction N-octadecanoyl-1,2-di-(9Z-octadecenoyl)-sn-glycero-3-phosphoethanolamine + H2O = N-octadecanoyl ethanolamine + 1,2-di-(9Z-octadecenoyl)-sn-glycero-3-phosphate + H(+). The catalysed reaction is N,1,2-tri-(9Z-octadecenoyl)-sn-glycero-3-phosphoethanolamine + H2O = N-(9Z-octadecenoyl) ethanolamine + 1,2-di-(9Z-octadecenoyl)-sn-glycero-3-phosphate + H(+). It catalyses the reaction N-(5Z,8Z,11Z,14Z-eicosatetraenoyl)-1,2-diacyl-sn-glycero-3-phosphoethanolamine + H2O = N-(5Z,8Z,11Z,14Z-eicosatetraenoyl)-ethanolamine + a 1,2-diacyl-sn-glycero-3-phosphate + H(+). The enzyme catalyses N-(5Z,8Z,11Z,14Z-eicosatetraenoyl)-1,2-di-(9Z-octadecenoyl)-sn-glycero-3-phosphoethanolamine + H2O = N-(5Z,8Z,11Z,14Z-eicosatetraenoyl)-ethanolamine + 1,2-di-(9Z-octadecenoyl)-sn-glycero-3-phosphate + H(+). It carries out the reaction 1-O-(1Z-octadecenoyl)-2-(9Z-octadecenoyl)-sn-glycero-3-phospho-N-hexadecanoyl-ethanolamine + H2O = 1-O-(1Z-octadecenoyl)-2-(9Z-octadecenoyl)-sn-glycero-3-phosphate + N-hexadecanoylethanolamine + H(+). The catalysed reaction is N,1-diacyl-sn-glycero-3-phosphoethanolamine + H2O = an N-acylethanolamine + a 1-acyl-sn-glycero-3-phosphate + H(+). It catalyses the reaction N,1-dihexadecanoyl-sn-glycero-3-phosphoethanolamine + H2O = N-hexadecanoylethanolamine + 1-hexadecanoyl-sn-glycero-3-phosphate + H(+). The enzyme catalyses N-(5Z,8Z,11Z,14Z-eicosatetraenoyl)-1-(9Z-octadecenoyl)-sn-glycero-3-phosphoethanolamine + H2O = N-(5Z,8Z,11Z,14Z-eicosatetraenoyl)-ethanolamine + 1-(9Z-octadecenoyl)-sn-glycero-3-phosphate + H(+). Activated by divalent cations. Activated by bile acids. Activated by membrane phospholipids such as phosphatidylethanolamines. Inhibited by cardiolipins. Its function is as follows. D-type phospholipase that hydrolyzes N-acyl-phosphatidylethanolamines (NAPEs) to produce bioactive N-acylethanolamines/fatty acid ethanolamides (NAEs/FAEs) and phosphatidic acid. Cleaves the terminal phosphodiester bond of diacyl- and alkenylacyl-NAPEs, primarily playing a role in the generation of long-chain saturated and monounsaturated NAEs in the brain. May control NAPE homeostasis in dopaminergic neuron membranes and regulate neuron survival, partly through RAC1 activation. As a regulator of lipid metabolism in the adipose tissue, mediates the crosstalk between adipocytes, gut microbiota and immune cells to control body temperature and weight. In particular, regulates energy homeostasis by promoting cold-induced brown or beige adipocyte differentiation program to generate heat from fatty acids and glucose. Has limited D-type phospholipase activity toward N-acyl lyso-NAPEs. The polypeptide is N-acyl-phosphatidylethanolamine-hydrolyzing phospholipase D (Napepld) (Rattus norvegicus (Rat)).